A 426-amino-acid chain; its full sequence is Histidine--tRNA ligase (426 aa).

It belongs to the class-II aminoacyl-tRNA synthetase family. As to quaternary structure, homodimer.

Its subcellular location is the cytoplasm. The catalysed reaction is tRNA(His) + L-histidine + ATP = L-histidyl-tRNA(His) + AMP + diphosphate + H(+). The protein is Histidine--tRNA ligase of Streptococcus pyogenes serotype M5 (strain Manfredo).